The chain runs to 1050 residues: Self-sufficient cytochrome P450 monooxygenase CYP505E5 (1050 aa).

C405 lines the heme pocket. The tract at residues 461-495 is disordered; it reads TATGLSRRSMLVARDGSSEESSNHPAEARGDHAPA. Residues 500–641 enclose the Flavodoxin-like domain; that stretch reads VSFFYGSNSG…DLEAWEETSL (142 aa). FMN-binding positions include 506-510 and 585-617; these read SNSGT and VFGC…TRLA. The FAD-binding FR-type domain occupies 679-907; sequence KGLIEAKVTA…RPAKETFHLP (229 aa).

It in the N-terminal section; belongs to the cytochrome P450 family. It depends on FAD as a cofactor. The cofactor is FMN. Heme is required as a cofactor.

It carries out the reaction 2 oxidized [cytochrome P450] + NADPH = 2 reduced [cytochrome P450] + NADP(+) + H(+). The catalysed reaction is an organic molecule + reduced [NADPH--hemoprotein reductase] + O2 = an alcohol + oxidized [NADPH--hemoprotein reductase] + H2O + H(+). The enzyme catalyses dodecanoate + reduced [NADPH--hemoprotein reductase] + O2 = 5-hydroxydodecanoate + oxidized [NADPH--hemoprotein reductase] + H2O + H(+). It catalyses the reaction tetradecanoate + reduced [NADPH--hemoprotein reductase] + O2 = 7-hydroxytetradecanoate + oxidized [NADPH--hemoprotein reductase] + H2O + H(+). It carries out the reaction dodecan-1-ol + reduced [NADPH--hemoprotein reductase] + O2 = 1,5-dodecanediol + oxidized [NADPH--hemoprotein reductase] + H2O + H(+). The catalysed reaction is dodecan-1-ol + reduced [NADPH--hemoprotein reductase] + O2 = 1,4-dodecanediol + oxidized [NADPH--hemoprotein reductase] + H2O + H(+). The enzyme catalyses dodecan-1-ol + reduced [NADPH--hemoprotein reductase] + O2 = 1,6-dodecanediol + oxidized [NADPH--hemoprotein reductase] + H2O + H(+). Its function is as follows. Self-sufficient cytochrome P450 monooxygenase that catalyzes the regioselective in-chain hydroxylation of alkanes, fatty alcohols, and fatty acids at the omega-7 position. Performs hydroxylation of C10-C16 n-alkanes and C12 and C14 fatty alcohols; and thereby enables the one step biocatalytic synthesis of rare alcohols such as 5-dodecanol and 7-tetradecanol. Converts 1-dodecanol into 1,5-dodecanediol as major product with very little sub-terminally hydroxylated products with the 1,4-dodecanediol and 1,6-dodecanediol more abundant. Converts dodecanoic acid to 5-hydroxydodecanoic acid which can be further converted into delta-dodecalactone by lactonization of the 5-hydroxy acid at low pH. Also gives sub-terminal hydroxylation of dodecanoic acid with 9-hydroxydodecanoic acid being the second most abundant product. The polypeptide is Self-sufficient cytochrome P450 monooxygenase CYP505E5 (Aspergillus kawachii (strain NBRC 4308) (White koji mold)).